Reading from the N-terminus, the 209-residue chain is Large ribosomal subunit protein uL3 (209 aa).

It belongs to the universal ribosomal protein uL3 family. As to quaternary structure, part of the 50S ribosomal subunit. Forms a cluster with proteins L14 and L19.

Functionally, one of the primary rRNA binding proteins, it binds directly near the 3'-end of the 23S rRNA, where it nucleates assembly of the 50S subunit. The sequence is that of Large ribosomal subunit protein uL3 from Nitratidesulfovibrio vulgaris (strain DSM 19637 / Miyazaki F) (Desulfovibrio vulgaris).